Here is a 460-residue protein sequence, read N- to C-terminus: Cation efflux system protein CusC (460 aa).

The N-terminal stretch at M1–G17 is a signal peptide. Residue C18 is the site of N-palmitoyl cysteine attachment. C18 carries the S-diacylglycerol cysteine lipid modification.

This sequence belongs to the outer membrane factor (OMF) (TC 1.B.17) family. Homotrimer. Component of the cus efflux system composed of CusA, CusB, CusC and CusF.

Its subcellular location is the cell outer membrane. Functionally, forms pores that allow passive diffusion of cations across the outer membrane. Part of a cation efflux system that mediates resistance to copper and silver. This is Cation efflux system protein CusC (cusC) from Escherichia coli O6:H1 (strain CFT073 / ATCC 700928 / UPEC).